A 308-amino-acid chain; its full sequence is Pseudouridine-5'-phosphate glycosidase (308 aa).

Residue glutamate 26 is the Proton donor of the active site. Substrate contacts are provided by lysine 87 and valine 107. Aspartate 139 is a Mn(2+) binding site. Residue 141–143 (SAD) coordinates substrate. The active-site Nucleophile is the lysine 160.

This sequence belongs to the pseudouridine-5'-phosphate glycosidase family. As to quaternary structure, homotrimer. Mn(2+) serves as cofactor.

It catalyses the reaction D-ribose 5-phosphate + uracil = psi-UMP + H2O. Catalyzes the reversible cleavage of pseudouridine 5'-phosphate (PsiMP) to ribose 5-phosphate and uracil. Functions biologically in the cleavage direction, as part of a pseudouridine degradation pathway. The chain is Pseudouridine-5'-phosphate glycosidase from Legionella pneumophila subsp. pneumophila (strain Philadelphia 1 / ATCC 33152 / DSM 7513).